A 327-amino-acid polypeptide reads, in one-letter code: Interleukin-12 subunit beta (327 aa).

Positions 1–22 (MCHQKLTISWFAMVLLVSPLMA) are cleaved as a signal peptide. The 84-residue stretch at 23-106 (IWELEKDVYV…LSHSRLLLHK (84 aa)) folds into the Ig-like C2-type domain. Cysteine 50 and cysteine 90 are oxidised to a cystine. 4 N-linked (GlcNAc...) asparagine glycosylation sites follow: asparagine 125, asparagine 135, asparagine 223, and asparagine 315. Residues 238-327 (PPKNLQLKPL…WSEWASVSCN (90 aa)) enclose the Fibronectin type-III domain.

Belongs to the IL-12B family. As to quaternary structure, heterodimer with IL12A; disulfide-linked. The heterodimer is known as interleukin IL-12. Heterodimer with IL23A; disulfide-linked. The heterodimer is known as interleukin IL-23. Also secreted as a monomer. Interacts with NBR1; this interaction promotes IL-12 secretion.

The protein resides in the secreted. Cytokine that can act as a growth factor for activated T and NK cells, enhance the lytic activity of NK/lymphokine-activated killer cells, and stimulate the production of IFN-gamma by resting PBMC. Functionally, associates with IL23A to form the IL-23 interleukin, a heterodimeric cytokine which functions in innate and adaptive immunity. IL-23 may constitute with IL-17 an acute response to infection in peripheral tissues. IL-23 binds to a heterodimeric receptor complex composed of IL12RB1 and IL23R, activates the Jak-Stat signaling cascade, stimulates memory rather than naive T-cells and promotes production of pro-inflammatory cytokines. IL-23 induces autoimmune inflammation and thus may be responsible for autoimmune inflammatory diseases and may be important for tumorigenesis. This Sigmodon hispidus (Hispid cotton rat) protein is Interleukin-12 subunit beta (IL12B).